The sequence spans 511 residues: LEM domain-containing protein 2 (511 aa).

Alanine 2 carries the post-translational modification N-acetylalanine. The LEM domain maps to 2 to 42 (AGLSDLELRRELQALGFQPGPITDTTRNVYRNKLRRLRGEA). Disordered regions lie at residues 18–110 (FQPG…SDAS) and 128–206 (GLSY…AGRT). Basic and acidic residues predominate over residues 38–80 (LRGEARLRDDERLREDAGPREDAGPRGPERQREEARLREEAPL). Residues 80–112 (LRARPAASVLRSEPWPLSPSPPAPSAASDASGP) form an interaction with lamin A/C complexes region. The required for nuclear retention and interaction with LMNA isoform C stretch occupies residues 80-141 (LRARPAASVL…PPHAGPGPLR (62 aa)). Composition is skewed to low complexity over residues 81-94 (RARPAASVLRSEPW) and 172-183 (APPSASARPHSA). 2 helical membrane passes run 221-241 (LLLWASLGLLLGFLAILWVKM) and 385-405 (VTHVLIFFWCLAFLWGLLILL). The tract at residues 403–511 (ILLKYRWRKL…KPSSFSDSER (109 aa)) is winged-Helix (WH). Phosphoserine occurs at positions 505, 507, and 509.

Interacts (via N-terminus) with LMNA isoform C (via C-terminus) (in vitro). Interacts (via LEM domain) with BANF1. Interacts (via C-terminus) with CHMP7. Interacts (via N-terminus) with tubulin; the interaction causes microtubule bundling and stabilization (in vitro). In terms of processing, phosphorylated; strongly phosphorylated in mitosis compared to G1/S. In terms of tissue distribution, ubiquitously expressed, including liver, brain, heart, skeletal muscle, lung, testis, spleen, kidney and white adipose tissue.

The protein localises to the nucleus inner membrane. Its subcellular location is the nucleus envelope. It is found in the cytoplasm. It localises to the cytoskeleton. The protein resides in the spindle. Functionally, nuclear lamina-associated inner nuclear membrane protein that is involved in nuclear structure organization and maintenance of nuclear envelope (NE) integrity and NE reformation after mitosis. Plays a role as transmembrane adapter for the endosomal sorting complexes required for transport (ESCRT), and is thereby involved in ESCRT-mediated NE reformation. Promotes ESCRT-mediated NE closure by recruiting CHMP7 and downstream ESCRT-III proteins IST1/CHMP8 and CHMP2A to the reforming NE during anaphase. During nuclear reassembly, condenses into a liquid-like coating around microtubule spindles and coassembles with CHMP7 to form a macromolecular O-ring seal at the confluence between membranes, chromatin, and the spindle to facilitate early nuclear sealing. Plays a role in the organization of heterochromatin associated with the NE and in the maintenance of NE organization under mechanical stress. Required for embryonic development and is involved in regulation of several signaling pathways such as MAPK and AKT. Required for myoblast differentiation involving regulation of ERK signaling. Essential for cardiac homeostasis and proper heart function. The polypeptide is LEM domain-containing protein 2 (Lemd2) (Mus musculus (Mouse)).